Here is a 161-residue protein sequence, read N- to C-terminus: Putative pre-16S rRNA nuclease (161 aa).

Belongs to the YqgF nuclease family.

Its subcellular location is the cytoplasm. Functionally, could be a nuclease involved in processing of the 5'-end of pre-16S rRNA. The sequence is that of Putative pre-16S rRNA nuclease from Rhodospirillum rubrum (strain ATCC 11170 / ATH 1.1.1 / DSM 467 / LMG 4362 / NCIMB 8255 / S1).